The sequence spans 706 residues: Termination factor NPH-I homolog (706 aa).

Residues 62–227 (IGQGENTRGL…VPCFNMLSGR (166 aa)) enclose the Helicase ATP-binding domain. 75–82 (HQMGMGKT) contacts ATP. The short motif at 168–171 (DEAH) is the DEAH box element. The region spanning 417 to 599 (QCLQPLKVLE…HLNSAFRDLL (183 aa)) is the Helicase C-terminal domain.

This sequence belongs to the DEAD box helicase family. DEAH subfamily. As to quaternary structure, part of the viral DNA-directed RNA polymerase that consists of 8 polII-like subunits (RPB1, RPB2, RPB3, RPB5, RPB6, RPB7, RPB9, RPB10), a capping enzyme and a termination factor.

It is found in the virion. In terms of biological role, putative DNA-dependent ATPase required for providing the needed energy to achieve the termination of early transcripts. The polypeptide is Termination factor NPH-I homolog (Ornithodoros (relapsing fever ticks)).